Reading from the N-terminus, the 353-residue chain is O-antigen biosynthesis glycosyltransferase WclY (353 aa).

A helical membrane pass occupies residues 116–136; sequence SLIWGLLWCSIWLFFDKLVIL. Residues N190 and E271 each coordinate UDP. The short motif at 263 to 271 is the E(x7)E glycosyltransferase motif element; sequence EGFGLTVLE.

The protein belongs to the glycosyltransferase group 1 family. Glycosyltransferase 4 subfamily.

The protein localises to the membrane. The protein operates within bacterial outer membrane biogenesis; LPS O-antigen biosynthesis. Its function is as follows. Involved in the assembly of the O-repeating unit during O-antigen biosynthesis. N-acetylglucosamine transferase accountable for the alpha-D-GlcNAc-1,4-beta-D-Gal linkage within the O-antigen. In Escherichia coli, this protein is O-antigen biosynthesis glycosyltransferase WclY.